The primary structure comprises 141 residues: Nucleoside diphosphate kinase (141 aa).

ATP contacts are provided by Lys11, Phe59, Arg87, Thr93, Arg104, and Asn114. The active-site Pros-phosphohistidine intermediate is His117.

The protein belongs to the NDK family. In terms of assembly, homotetramer. Mg(2+) is required as a cofactor.

Its subcellular location is the cytoplasm. It catalyses the reaction a 2'-deoxyribonucleoside 5'-diphosphate + ATP = a 2'-deoxyribonucleoside 5'-triphosphate + ADP. It carries out the reaction a ribonucleoside 5'-diphosphate + ATP = a ribonucleoside 5'-triphosphate + ADP. Functionally, major role in the synthesis of nucleoside triphosphates other than ATP. The ATP gamma phosphate is transferred to the NDP beta phosphate via a ping-pong mechanism, using a phosphorylated active-site intermediate. The protein is Nucleoside diphosphate kinase of Paracidovorax citrulli (strain AAC00-1) (Acidovorax citrulli).